We begin with the raw amino-acid sequence, 207 residues long: MAKISFTPARHRRRKKVLKMAKGYFGSKSTLYKTAHEQVMRSLQYAYRDRKQRKRDFRKLWISRINAGAMLCGMQYSYLMHGLALAKVDVNRKVLADLAHLQPGPVESVKAVEVLQQETQPQPEEKTSLQPEKVLSTELSEEKSDDTLETKPQTTQVKAKKPSLDLSKMLLHELKKLAKEHKVPNFHKLKKAEIVTALKKALAKKII.

The interval 117-161 (QETQPQPEEKTSLQPEKVLSTELSEEKSDDTLETKPQTTQVKAKK) is disordered. Over residues 140–149 (SEEKSDDTLE) the composition is skewed to basic and acidic residues.

Belongs to the bacterial ribosomal protein bL20 family.

Functionally, binds directly to 23S ribosomal RNA and is necessary for the in vitro assembly process of the 50S ribosomal subunit. It is not involved in the protein synthesizing functions of that subunit. The chain is Large ribosomal subunit protein bL20 from Onion yellows phytoplasma (strain OY-M).